A 147-amino-acid polypeptide reads, in one-letter code: Myoglobin (147 aa).

The 140-residue stretch at 2 to 141 (ADFDAVLKFW…VIADLEANYK (140 aa)) folds into the Globin domain. Residue His-60 coordinates nitrite. His-60 is an O2 binding site. His-89 provides a ligand contact to heme b.

The protein belongs to the globin family. As to quaternary structure, monomeric.

Its subcellular location is the cytoplasm. It localises to the sarcoplasm. The enzyme catalyses Fe(III)-heme b-[protein] + nitric oxide + H2O = Fe(II)-heme b-[protein] + nitrite + 2 H(+). It carries out the reaction H2O2 + AH2 = A + 2 H2O. In terms of biological role, monomeric heme protein which primary function is to store oxygen and facilitate its diffusion within muscle tissues. Reversibly binds oxygen through a pentacoordinated heme iron and enables its timely and efficient release as needed during periods of heightened demand. Depending on the oxidative conditions of tissues and cells, and in addition to its ability to bind oxygen, it also has a nitrite reductase activity whereby it regulates the production of bioactive nitric oxide. Under stress conditions, like hypoxia and anoxia, it also protects cells against reactive oxygen species thanks to its pseudoperoxidase activity. In Sarda chiliensis (Pacific bonito), this protein is Myoglobin (mb).